The chain runs to 552 residues: Chromosomal replication initiator protein DnaA (552 aa).

The domain I, interacts with DnaA modulators stretch occupies residues 1 to 90 (MWNETWNEIT…FTVAVTVDPT (90 aa)). The segment at 90 to 210 (TLDVIQDLPH…KPAHDPDRNG (121 aa)) is domain II. The disordered stretch occupies residues 113-213 (EHPHYSPVSQ…HDPDRNGSLN (101 aa)). Low complexity predominate over residues 155-170 (PQPSQSSQSAQQQPAQ). Positions 211–427 (SLNPRYTFDT…GAFIRVSAYA (217 aa)) are domain III, AAA+ region. 4 residues coordinate ATP: G255, G257, K258, and T259. Residues 428 to 552 (SLNEAPINMA…TQQIKSSDRA (125 aa)) are domain IV, binds dsDNA.

It belongs to the DnaA family. Oligomerizes as a right-handed, spiral filament on DNA at oriC.

The protein localises to the cytoplasm. Plays an essential role in the initiation and regulation of chromosomal replication. ATP-DnaA binds to the origin of replication (oriC) to initiate formation of the DNA replication initiation complex once per cell cycle. Binds the DnaA box (a 9 base pair repeat at the origin) and separates the double-stranded (ds)DNA. Forms a right-handed helical filament on oriC DNA; dsDNA binds to the exterior of the filament while single-stranded (ss)DNA is stabiized in the filament's interior. The ATP-DnaA-oriC complex binds and stabilizes one strand of the AT-rich DNA unwinding element (DUE), permitting loading of DNA polymerase. After initiation quickly degrades to an ADP-DnaA complex that is not apt for DNA replication. Binds acidic phospholipids. The polypeptide is Chromosomal replication initiator protein DnaA (Corynebacterium diphtheriae (strain ATCC 700971 / NCTC 13129 / Biotype gravis)).